The following is a 123-amino-acid chain: Fluoride-specific ion channel FluC (123 aa).

4 helical membrane-spanning segments follow: residues M1–A21, L32–F52, F66–F86, and G99–F119. Residues G73 and T76 each contribute to the Na(+) site.

It belongs to the fluoride channel Fluc/FEX (TC 1.A.43) family.

The protein resides in the cell inner membrane. It catalyses the reaction fluoride(in) = fluoride(out). With respect to regulation, na(+) is not transported, but it plays an essential structural role and its presence is essential for fluoride channel function. Fluoride-specific ion channel. Important for reducing fluoride concentration in the cell, thus reducing its toxicity. The protein is Fluoride-specific ion channel FluC of Psychrobacter cryohalolentis (strain ATCC BAA-1226 / DSM 17306 / VKM B-2378 / K5).